The chain runs to 202 residues: Peptidyl-tRNA hydrolase (202 aa).

Tyr-14 is a tRNA binding site. His-19 (proton acceptor) is an active-site residue. Tyr-64, Asn-66, and Asn-112 together coordinate tRNA.

It belongs to the PTH family. As to quaternary structure, monomer.

The protein resides in the cytoplasm. The enzyme catalyses an N-acyl-L-alpha-aminoacyl-tRNA + H2O = an N-acyl-L-amino acid + a tRNA + H(+). In terms of biological role, hydrolyzes ribosome-free peptidyl-tRNAs (with 1 or more amino acids incorporated), which drop off the ribosome during protein synthesis, or as a result of ribosome stalling. Catalyzes the release of premature peptidyl moieties from peptidyl-tRNA molecules trapped in stalled 50S ribosomal subunits, and thus maintains levels of free tRNAs and 50S ribosomes. This is Peptidyl-tRNA hydrolase from Xanthobacter autotrophicus (strain ATCC BAA-1158 / Py2).